We begin with the raw amino-acid sequence, 285 residues long: Protoheme IX farnesyltransferase (285 aa).

9 consecutive transmembrane segments (helical) span residues 13 to 33 (LGKL…AFLA), 40 to 60 (LLPI…AMII), 89 to 109 (EAII…FIDN), 110 to 130 (ILTA…YTIL), 137 to 157 (LNIV…YTSL), 165 to 185 (GFLL…SLAL), 194 to 214 (AHYP…AIAI), 230 to 252 (INLI…SYRL), and 265 to 285 (FIFS…VKLI).

The protein belongs to the UbiA prenyltransferase family. Protoheme IX farnesyltransferase subfamily.

Its subcellular location is the cell membrane. The catalysed reaction is heme b + (2E,6E)-farnesyl diphosphate + H2O = Fe(II)-heme o + diphosphate. The protein operates within porphyrin-containing compound metabolism; heme O biosynthesis; heme O from protoheme: step 1/1. In terms of biological role, converts heme B (protoheme IX) to heme O by substitution of the vinyl group on carbon 2 of heme B porphyrin ring with a hydroxyethyl farnesyl side group. The chain is Protoheme IX farnesyltransferase from Saccharolobus islandicus (strain Y.N.15.51 / Yellowstone #2) (Sulfolobus islandicus).